The following is a 406-amino-acid chain: Vitamin D3 dihydroxylase (406 aa).

Over residues 1-15 (MTDTATTPQTTDAPA) the composition is skewed to low complexity. The tract at residues 1–24 (MTDTATTPQTTDAPAFPSNRSCPY) is disordered. Residue Thr-81 participates in calciol binding. Positions 103 and 107 each coordinate heme. Positions 193, 236, and 293 each coordinate calciol. Residues Arg-297, His-353, and Cys-355 each contribute to the heme site.

This sequence belongs to the cytochrome P450 family. Heme is required as a cofactor.

It is found in the cytoplasm. It catalyses the reaction calciol + 2 reduced [2Fe-2S]-[ferredoxin] + O2 + 2 H(+) = calcidiol + 2 oxidized [2Fe-2S]-[ferredoxin] + H2O. The enzyme catalyses calcidiol + 2 reduced [2Fe-2S]-[ferredoxin] + O2 + 2 H(+) = calcitriol + 2 oxidized [2Fe-2S]-[ferredoxin] + H2O. Functionally, involved in the metabolism of vitamin D3 (calciol) and of a number of sulfonylurea herbicides. Catalyzes the two-step hydroxylation (25- and 1-alpha-hydroxylation) of vitamin D3 (VD3) to yield its active form 1-alpha,25-dihydroxyvitamin D3 (calcitriol). The first step is the hydroxylation of the C-25 position of VD3 to produce 25-hydroxyvitamin D3 (calcidiol). The second reaction is the hydroxylation of the C1-alpha-position of calcidiol to produce calcitriol. It can also hydroxylate vitamin D2. The protein is Vitamin D3 dihydroxylase of Streptomyces griseolus.